The chain runs to 254 residues: Ornithine decarboxylase antizyme (254 aa).

The protein belongs to the ODC antizyme family. As to quaternary structure, interacts with ODC1 and thereby sterically blocks ODC homodimerization.

Ornithine decarboxylase (ODC) antizyme protein that negatively regulates ODC activity and intracellular polyamine biosynthesis and uptake in response to increased intracellular polyamine levels. Binds to ODC monomers, inhibiting the assembly of the functional ODC homodimer, and targets the monomers for ubiquitin-independent proteolytic destruction by the 26S proteasome. Required for cellular differentiation in neuronal and myogenic lineages during embryonic development. The polypeptide is Ornithine decarboxylase antizyme (Oda) (Drosophila melanogaster (Fruit fly)).